Here is a 434-residue protein sequence, read N- to C-terminus: D-amino acid dehydrogenase (434 aa).

3-17 (VLVLGSGVIGTASAY) lines the FAD pocket.

The protein belongs to the DadA oxidoreductase family. It depends on FAD as a cofactor.

It carries out the reaction a D-alpha-amino acid + A + H2O = a 2-oxocarboxylate + AH2 + NH4(+). Its pathway is amino-acid degradation; D-alanine degradation; NH(3) and pyruvate from D-alanine: step 1/1. Its function is as follows. Oxidative deamination of D-amino acids. In Pseudomonas putida (strain ATCC 700007 / DSM 6899 / JCM 31910 / BCRC 17059 / LMG 24140 / F1), this protein is D-amino acid dehydrogenase.